A 189-amino-acid polypeptide reads, in one-letter code: UPF0301 protein RAF_ORF0041 (189 aa).

It belongs to the UPF0301 (AlgH) family.

The polypeptide is UPF0301 protein RAF_ORF0041 (Rickettsia africae (strain ESF-5)).